Consider the following 115-residue polypeptide: U3-lycotoxin-Ls1a (115 aa).

An N-terminal signal peptide occupies residues 1–20 (MKFVLLFGVLLVTLFSYSSA). The propeptide occupies 21-44 (EMLDDFDQADEDELLSSIEKEEAR). 4 disulfides stabilise this stretch: cysteine 48-cysteine 63, cysteine 55-cysteine 72, cysteine 62-cysteine 87, and cysteine 74-cysteine 85.

It belongs to the neurotoxin 19 (CSTX) family. 01 subfamily. In terms of tissue distribution, expressed by the venom gland.

The protein localises to the secreted. The sequence is that of U3-lycotoxin-Ls1a from Lycosa singoriensis (Wolf spider).